Reading from the N-terminus, the 222-residue chain is Protein-L-isoaspartate O-methyltransferase (222 aa).

The active site involves serine 73.

It belongs to the methyltransferase superfamily. L-isoaspartyl/D-aspartyl protein methyltransferase family.

Its subcellular location is the cytoplasm. It carries out the reaction [protein]-L-isoaspartate + S-adenosyl-L-methionine = [protein]-L-isoaspartate alpha-methyl ester + S-adenosyl-L-homocysteine. Functionally, catalyzes the methyl esterification of L-isoaspartyl residues in peptides and proteins that result from spontaneous decomposition of normal L-aspartyl and L-asparaginyl residues. It plays a role in the repair and/or degradation of damaged proteins. The protein is Protein-L-isoaspartate O-methyltransferase of Chromobacterium violaceum (strain ATCC 12472 / DSM 30191 / JCM 1249 / CCUG 213 / NBRC 12614 / NCIMB 9131 / NCTC 9757 / MK).